The chain runs to 425 residues: High-affinity branched-chain amino acid transport system permease protein LivM (425 aa).

11 helical membrane-spanning segments follow: residues 6-26, 45-65, 92-112, 120-140, 145-165, 167-187, 191-211, 260-280, 311-331, 353-373, and 387-407; these read IAMALLSAAMFFVLAGVFMGV, WQWVFIGTAVVFFFQLLRPAF, FLVALLVLAVAWPFMVSRGTV, IYIILGLGLNVVVGLSGLLVL, FYAIGAYTFALLNHYYGLGFW, CLPIAGLMAAAAGFLLGFPVL, GDYLAIVTLGFGEIVRILLLN, RVIFLYLVALLLVVLSLFVIN, IKLTAFTISAAFAGFAGTLFA, IVVLGGMGSQFAVILAAILLV, and MLMLGGLMVLMMIWRPQGLLP.

The protein belongs to the binding-protein-dependent transport system permease family. LivHM subfamily.

The protein localises to the cell inner membrane. Part of the binding-protein-dependent transport system for branched-chain amino acids. Probably responsible for the translocation of the substrates across the membrane. This chain is High-affinity branched-chain amino acid transport system permease protein LivM (livM), found in Escherichia coli (strain K12).